A 233-amino-acid polypeptide reads, in one-letter code: Large ribosomal subunit protein uL1 (233 aa).

The protein belongs to the universal ribosomal protein uL1 family. As to quaternary structure, part of the 50S ribosomal subunit.

Functionally, binds directly to 23S rRNA. The L1 stalk is quite mobile in the ribosome, and is involved in E site tRNA release. Its function is as follows. Protein L1 is also a translational repressor protein, it controls the translation of the L11 operon by binding to its mRNA. The polypeptide is Large ribosomal subunit protein uL1 (Syntrophomonas wolfei subsp. wolfei (strain DSM 2245B / Goettingen)).